A 176-amino-acid polypeptide reads, in one-letter code: ATP synthase subunit delta (176 aa).

It belongs to the ATPase delta chain family. F-type ATPases have 2 components, F(1) - the catalytic core - and F(0) - the membrane proton channel. F(1) has five subunits: alpha(3), beta(3), gamma(1), delta(1), epsilon(1). F(0) has three main subunits: a(1), b(2) and c(10-14). The alpha and beta chains form an alternating ring which encloses part of the gamma chain. F(1) is attached to F(0) by a central stalk formed by the gamma and epsilon chains, while a peripheral stalk is formed by the delta and b chains.

It localises to the cell inner membrane. In terms of biological role, f(1)F(0) ATP synthase produces ATP from ADP in the presence of a proton or sodium gradient. F-type ATPases consist of two structural domains, F(1) containing the extramembraneous catalytic core and F(0) containing the membrane proton channel, linked together by a central stalk and a peripheral stalk. During catalysis, ATP synthesis in the catalytic domain of F(1) is coupled via a rotary mechanism of the central stalk subunits to proton translocation. Its function is as follows. This protein is part of the stalk that links CF(0) to CF(1). It either transmits conformational changes from CF(0) to CF(1) or is implicated in proton conduction. The protein is ATP synthase subunit delta of Campylobacter fetus subsp. fetus (strain 82-40).